A 236-amino-acid chain; its full sequence is CHD1 helical C-terminal domain containing protein 1 (236 aa).

Residues 44–145 form a CHD1 helical C-terminal domain (CHCT) region; the sequence is LDQDTFKTCK…SSQPAKFLVT (102 aa). Residues 184 to 236 are disordered; the sequence is LSNMQTPGQGSPLPGQPRSQDHVKKDSLRELSQKPKLKRKRIKEAPETPETEP. Over residues 202-216 the composition is skewed to basic and acidic residues; sequence SQDHVKKDSLRELSQ.

The protein localises to the cytoplasm. Its subcellular location is the nucleus. In terms of biological role, may play a role in regulation of apoptosis. The chain is CHD1 helical C-terminal domain containing protein 1 from Homo sapiens (Human).